We begin with the raw amino-acid sequence, 258 residues long: UPF0246 protein Jann_0444 (258 aa).

Belongs to the UPF0246 family.

The sequence is that of UPF0246 protein Jann_0444 from Jannaschia sp. (strain CCS1).